Here is a 444-residue protein sequence, read N- to C-terminus: Spermidine/putrescine import ATP-binding protein PotA (444 aa).

Residues 11–332 (ISLVDVDKEF…PVNKWVANFI (322 aa)) enclose the ABC transporter domain. 43–50 (GPSGSGKT) lines the ATP pocket. An insert region spans residues 111-201 (RIKKKAEEIP…ESFKKKYLTR (91 aa)).

Belongs to the ABC transporter superfamily. Spermidine/putrescine importer (TC 3.A.1.11.1) family. In terms of assembly, the complex is composed of two ATP-binding proteins (PotA), two transmembrane proteins (PotB and PotC) and a solute-binding protein (PotD).

The protein localises to the cell membrane. The catalysed reaction is ATP + H2O + polyamine-[polyamine-binding protein]Side 1 = ADP + phosphate + polyamineSide 2 + [polyamine-binding protein]Side 1.. Part of the ABC transporter complex PotABCD involved in spermidine/putrescine import. Responsible for energy coupling to the transport system. The protein is Spermidine/putrescine import ATP-binding protein PotA of Mesomycoplasma hyopneumoniae (strain 232) (Mycoplasma hyopneumoniae).